An 87-amino-acid chain; its full sequence is Antitoxin epsilon (87 aa).

The protein belongs to the epsilon antitoxin family. As to quaternary structure, in the presence of the zeta toxin, forms an inactive PezA(2)PezT(2) heterotetramer.

Antitoxin component of a type II toxin-antitoxin (TA) system. Neutralizes the toxic effect of cognate zeta toxin. Part of a postsegregational killing (PSK) system involved in the killing of plasmid-free cells. Continuous synthesis of the epsilon antitoxin is required to counteract the zeta toxin. The polypeptide is Antitoxin epsilon (Lactococcus lactis subsp. lactis (Streptococcus lactis)).